The sequence spans 409 residues: Histidine--tRNA ligase (409 aa).

Belongs to the class-II aminoacyl-tRNA synthetase family.

The protein localises to the cytoplasm. The catalysed reaction is tRNA(His) + L-histidine + ATP = L-histidyl-tRNA(His) + AMP + diphosphate + H(+). This Archaeoglobus fulgidus (strain ATCC 49558 / DSM 4304 / JCM 9628 / NBRC 100126 / VC-16) protein is Histidine--tRNA ligase (hisS).